We begin with the raw amino-acid sequence, 101 residues long: Urease subunit beta (101 aa).

It belongs to the urease beta subunit family. Heterotrimer of UreA (gamma), UreB (beta) and UreC (alpha) subunits. Three heterotrimers associate to form the active enzyme.

It is found in the cytoplasm. It catalyses the reaction urea + 2 H2O + H(+) = hydrogencarbonate + 2 NH4(+). It functions in the pathway nitrogen metabolism; urea degradation; CO(2) and NH(3) from urea (urease route): step 1/1. This is Urease subunit beta from Granulibacter bethesdensis (strain ATCC BAA-1260 / CGDNIH1).